Consider the following 218-residue polypeptide: MINLILLGLPGAGKGTASERIVDKYHLTHISTGDMFREAMANKTKVGLEAKSYIDKGNLVPDEVTARLVEERLSQPDIKEGYILDGFPRTTVQAELLEGITKRLKKPLTNVIALEVDEDTLIKRLSARYMCKNCGATYNKISKQPKVEGTCDRCGSHEFYQREDDKPEVVKNRLEVNEKMNAPLKDFYQKKGLLTIINGEQTPEKVFEDIDAVLSNNQ.

11–16 (GAGKGT) is a binding site for ATP. Residues 31 to 60 (STGDMFREAMANKTKVGLEAKSYIDKGNLV) form an NMP region. AMP-binding positions include Thr-32, Arg-37, 58–60 (NLV), 86–89 (GFPR), and Gln-93. The interval 127–165 (ARYMCKNCGATYNKISKQPKVEGTCDRCGSHEFYQREDD) is LID. Arg-128 contributes to the ATP binding site. Zn(2+) contacts are provided by Cys-131 and Cys-134. 137–138 (TY) is a binding site for ATP. Residues Cys-151 and Cys-154 each contribute to the Zn(2+) site. AMP is bound by residues Arg-162 and Arg-173. Gln-201 is an ATP binding site.

It belongs to the adenylate kinase family. As to quaternary structure, monomer.

The protein localises to the cytoplasm. The enzyme catalyses AMP + ATP = 2 ADP. It participates in purine metabolism; AMP biosynthesis via salvage pathway; AMP from ADP: step 1/1. Its function is as follows. Catalyzes the reversible transfer of the terminal phosphate group between ATP and AMP. Plays an important role in cellular energy homeostasis and in adenine nucleotide metabolism. The protein is Adenylate kinase of Lactobacillus acidophilus (strain ATCC 700396 / NCK56 / N2 / NCFM).